The sequence spans 95 residues: F(1)-ATPase inhibitor IF(1), mitochondrial (95 aa).

The N-terminal 25 residues, methionine 1–leucine 25, are a transit peptide targeting the mitochondrion. Disordered regions lie at residues threonine 20–alanine 48 and leucine 76–asparagine 95.

Belongs to the ATPase inhibitor family. As to quaternary structure, associates with the mitochondrial small ribosomal subunit (mt-SSU). IF(1) coiled-coil forms a helical bundle with the C-terminal extension of uS17m and also binds to mS27 in the mtSSU tail. Since the C-terminal extension of uS17m stabilizing the IF(1) on the mt-SSU is specific to N.crassa, IF(1) binding might also be specific.

The protein resides in the mitochondrion. In terms of biological role, endogenous F(1)F(0)-ATPase inhibitor limiting ATP depletion when the mitochondrial membrane potential falls below a threshold and the F(1)F(0)-ATP synthase starts hydrolyzing ATP to pump protons out of the mitochondrial matrix. Required to avoid the consumption of cellular ATP when the F(1)F(0)-ATP synthase enzyme acts as an ATP hydrolase. Functions through inserting its N-terminal part into the catalytically active F1-ATPase, thereby blocking its rotational movement and subsequently the ATP hydrolase activity. The sequence is that of F(1)-ATPase inhibitor IF(1), mitochondrial (inh1) from Neurospora crassa (strain ATCC 24698 / 74-OR23-1A / CBS 708.71 / DSM 1257 / FGSC 987).